The following is a 249-amino-acid chain: 3-deoxy-manno-octulosonate cytidylyltransferase (249 aa).

This sequence belongs to the KdsB family.

Its subcellular location is the cytoplasm. The catalysed reaction is 3-deoxy-alpha-D-manno-oct-2-ulosonate + CTP = CMP-3-deoxy-beta-D-manno-octulosonate + diphosphate. It participates in nucleotide-sugar biosynthesis; CMP-3-deoxy-D-manno-octulosonate biosynthesis; CMP-3-deoxy-D-manno-octulosonate from 3-deoxy-D-manno-octulosonate and CTP: step 1/1. It functions in the pathway bacterial outer membrane biogenesis; lipopolysaccharide biosynthesis. Its function is as follows. Activates KDO (a required 8-carbon sugar) for incorporation into bacterial lipopolysaccharide in Gram-negative bacteria. The protein is 3-deoxy-manno-octulosonate cytidylyltransferase of Oleidesulfovibrio alaskensis (strain ATCC BAA-1058 / DSM 17464 / G20) (Desulfovibrio alaskensis).